Reading from the N-terminus, the 418-residue chain is MHIFDELKERGLIFQTTDEEALRKALEEGQVSYYTGYDPTADSLHLGHLVAILTSRRLQLAGHKPYALVGGATGLIGDPSFKDAERSLQTKDTVDGWVKSIQGQLSRFLDFENGENKAVMVNNYDWFGSISFIDFLRDIGKYFTVNYMMSKESVKKRIETGISYTEFAYQIMQGYDFFVLNQDHNVTLQIGGSDQWGNMTAGTELLRRKADKTGHVITVPLITDATGKKFGKSEGNAVWLNPEKTSPYEMYQFWMNVMDADAIRFLKIFTFLSLDEIEDIRKQFEAAPHERLAQKVLAREVVTLVHGEEAYKEALNITEQLFAGNIKNLSVKELKQGLRGVPNYQVQADENNNIVELLVSSGIVNSKRQAREDVQNGAIYVNGDRIQDLDYVLSDADKLENELTVIRRGKKKYFVLTY.

Tyr34 lines the L-tyrosine pocket. Positions 39-48 match the 'HIGH' region motif; it reads PTADSLHLGH. L-tyrosine is bound by residues Tyr169 and Gln173. The 'KMSKS' region signature appears at 229–233; it reads KFGKS. Lys232 lines the ATP pocket. The S4 RNA-binding domain occupies 352–418; sequence NNIVELLVSS…GKKKYFVLTY (67 aa).

Belongs to the class-I aminoacyl-tRNA synthetase family. TyrS type 1 subfamily. As to quaternary structure, homodimer.

Its subcellular location is the cytoplasm. It catalyses the reaction tRNA(Tyr) + L-tyrosine + ATP = L-tyrosyl-tRNA(Tyr) + AMP + diphosphate + H(+). Catalyzes the attachment of tyrosine to tRNA(Tyr) in a two-step reaction: tyrosine is first activated by ATP to form Tyr-AMP and then transferred to the acceptor end of tRNA(Tyr). The chain is Tyrosine--tRNA ligase from Streptococcus pneumoniae (strain CGSP14).